Here is a 394-residue protein sequence, read N- to C-terminus: Elongation factor Tu (394 aa).

A tr-type G domain is found at 10-204 (KPHVNVGTIG…FLDSYIPEPE (195 aa)). The interval 19–26 (GHVDHGKT) is G1. 19 to 26 (GHVDHGKT) serves as a coordination point for GTP. T26 contacts Mg(2+). Residues 60-64 (GITIN) form a G2 region. The G3 stretch occupies residues 81–84 (DCPG). GTP contacts are provided by residues 81–85 (DCPGH) and 136–139 (NKCD). A G4 region spans residues 136–139 (NKCD). The interval 174–176 (SAL) is G5.

The protein belongs to the TRAFAC class translation factor GTPase superfamily. Classic translation factor GTPase family. EF-Tu/EF-1A subfamily. As to quaternary structure, monomer.

The protein localises to the cytoplasm. It carries out the reaction GTP + H2O = GDP + phosphate + H(+). Its function is as follows. GTP hydrolase that promotes the GTP-dependent binding of aminoacyl-tRNA to the A-site of ribosomes during protein biosynthesis. The chain is Elongation factor Tu from Salmonella arizonae (strain ATCC BAA-731 / CDC346-86 / RSK2980).